Consider the following 176-residue polypeptide: Nicotinamide-nucleotide adenylyltransferase (176 aa).

The protein belongs to the archaeal NMN adenylyltransferase family.

It is found in the cytoplasm. The enzyme catalyses beta-nicotinamide D-ribonucleotide + ATP + H(+) = diphosphate + NAD(+). It functions in the pathway cofactor biosynthesis; NAD(+) biosynthesis; NAD(+) from nicotinamide D-ribonucleotide: step 1/1. The protein is Nicotinamide-nucleotide adenylyltransferase of Halorubrum lacusprofundi (strain ATCC 49239 / DSM 5036 / JCM 8891 / ACAM 34).